The sequence spans 362 residues: Class I histocompatibility antigen, Gogo-B*0102 alpha chain (362 aa).

An N-terminal signal peptide occupies residues 1 to 24 (MRVTAPRTLLLLLSAALALTETWA). The interval 25-114 (GSHSMRYFDT…ALRYYNQSEA (90 aa)) is alpha-1. Residues 25–308 (GSHSMRYFDT…EPSSQSTIPI (284 aa)) lie on the Extracellular side of the membrane. An N-linked (GlcNAc...) asparagine glycan is attached at Asn110. Residues 115–206 (GSHTFQRMFG…ENGRETLQRA (92 aa)) form an alpha-2 region. 2 cysteine pairs are disulfide-bonded: Cys125/Cys188 and Cys227/Cys283. Residues 207-298 (DTPKTHVTHH…GLPKPLTLRW (92 aa)) are alpha-3. An Ig-like C1-type domain is found at 209 to 295 (PKTHVTHHPI…QHEGLPKPLT (87 aa)). The tract at residues 299-308 (EPSSQSTIPI) is connecting peptide. Residues 309–332 (VGIVAGLAVLAVVVIGAVVTAVIC) form a helical membrane-spanning segment. Over 333–362 (RRKSSGGKGGSYSQAASSDSAQGSDVSLTA) the chain is Cytoplasmic. Positions 335-362 (KSSGGKGGSYSQAASSDSAQGSDVSLTA) are disordered. The span at 343 to 362 (SYSQAASSDSAQGSDVSLTA) shows a compositional bias: low complexity.

Belongs to the MHC class I family. Heterodimer of an alpha chain and a beta chain (beta-2-microglobulin).

It is found in the membrane. In terms of biological role, involved in the presentation of foreign antigens to the immune system. This chain is Class I histocompatibility antigen, Gogo-B*0102 alpha chain, found in Gorilla gorilla gorilla (Western lowland gorilla).